We begin with the raw amino-acid sequence, 304 residues long: Elongation factor Ts (304 aa).

Residues 80 to 83 (TDFV) form an involved in Mg(2+) ion dislocation from EF-Tu region.

The protein belongs to the EF-Ts family.

The protein localises to the cytoplasm. In terms of biological role, associates with the EF-Tu.GDP complex and induces the exchange of GDP to GTP. It remains bound to the aminoacyl-tRNA.EF-Tu.GTP complex up to the GTP hydrolysis stage on the ribosome. This Clostridium tetani (strain Massachusetts / E88) protein is Elongation factor Ts.